We begin with the raw amino-acid sequence, 370 residues long: 3-isopropylmalate dehydrogenase 2 (370 aa).

An NAD(+)-binding site is contributed by 77-90 (GPKWDAVPYEVRPE). 4 residues coordinate substrate: Arg97, Arg107, Arg135, and Asp226. Mg(2+) is bound by residues Asp226, Asp250, and Asp254. 290–302 (GSAPDIAGKGLAN) is an NAD(+) binding site.

The protein belongs to the isocitrate and isopropylmalate dehydrogenases family. LeuB type 1 subfamily. As to quaternary structure, homodimer. The cofactor is Mg(2+). It depends on Mn(2+) as a cofactor.

The protein localises to the cytoplasm. It carries out the reaction (2R,3S)-3-isopropylmalate + NAD(+) = 4-methyl-2-oxopentanoate + CO2 + NADH. Its pathway is amino-acid biosynthesis; L-leucine biosynthesis; L-leucine from 3-methyl-2-oxobutanoate: step 3/4. In terms of biological role, catalyzes the oxidation of 3-carboxy-2-hydroxy-4-methylpentanoate (3-isopropylmalate) to 3-carboxy-4-methyl-2-oxopentanoate. The product decarboxylates to 4-methyl-2 oxopentanoate. The polypeptide is 3-isopropylmalate dehydrogenase 2 (Bradyrhizobium diazoefficiens (strain JCM 10833 / BCRC 13528 / IAM 13628 / NBRC 14792 / USDA 110)).